Here is a 278-residue protein sequence, read N- to C-terminus: Expansin-B17 (278 aa).

A signal peptide spans 1–26; that stretch reads MAAASSRSFSLCVLLLLLLLAPPISA. In terms of domain architecture, Expansin-like EG45 spans 66–176; it reads GGACGYGSLV…RRTACKYGGK (111 aa). 3 disulfide bridges follow: cysteine 69-cysteine 98, cysteine 101-cysteine 171, and cysteine 106-cysteine 112. Residues 189 to 270 enclose the Expansin-like CBD domain; sequence FWLSLLVEFE…NWKPTATYTS (82 aa).

This sequence belongs to the expansin family. Expansin B subfamily.

The protein localises to the secreted. It localises to the cell wall. Its subcellular location is the membrane. Its function is as follows. May cause loosening and extension of plant cell walls by disrupting non-covalent bonding between cellulose microfibrils and matrix glucans. No enzymatic activity has been found. May be required for rapid internodal elongation in deepwater rice during submergence. This chain is Expansin-B17 (EXPB17), found in Oryza sativa subsp. japonica (Rice).